The primary structure comprises 254 residues: Diphthine synthase (254 aa).

S-adenosyl-L-methionine is bound by residues Asp83, Leu86, 111–112, Leu163, and Val205; that span reads SI.

The protein belongs to the diphthine synthase family. Homodimer.

It catalyses the reaction 2-[(3S)-amino-3-carboxypropyl]-L-histidyl-[translation elongation factor 2] + 3 S-adenosyl-L-methionine = diphthine-[translation elongation factor 2] + 3 S-adenosyl-L-homocysteine + 3 H(+). Its pathway is protein modification; peptidyl-diphthamide biosynthesis. Its function is as follows. S-adenosyl-L-methionine-dependent methyltransferase that catalyzes the trimethylation of the amino group of the modified target histidine residue in translation elongation factor 2 (EF-2), to form an intermediate called diphthine. The three successive methylation reactions represent the second step of diphthamide biosynthesis. The protein is Diphthine synthase of Pyrobaculum aerophilum (strain ATCC 51768 / DSM 7523 / JCM 9630 / CIP 104966 / NBRC 100827 / IM2).